Reading from the N-terminus, the 217-residue chain is MTNLKSKALDFTQNFVIALDGPAASGKGTIGFMLAEKFSLKYVQSSIVYRQLAFNCIKEKIDITDINKVISLSKEINITDKFDLEDENIGGVASQIAVIAEVRDNLNKHLVKLINTTPRILMEGRDIGTIVAPNADFKIFITANPEVRAERRYKQLQAKGKACILDEILQQIILRDKRDKEREVAPLLPALDALIIDTSKLSPLSVVEQIMQFILKE.

21 to 29 lines the ATP pocket; that stretch reads GPAASGKGT.

Belongs to the cytidylate kinase family. Type 1 subfamily.

The protein resides in the cytoplasm. It carries out the reaction CMP + ATP = CDP + ADP. The catalysed reaction is dCMP + ATP = dCDP + ADP. This chain is Cytidylate kinase, found in Rickettsia bellii (strain OSU 85-389).